Here is a 132-residue protein sequence, read N- to C-terminus: MVDAFCATWKLTDSQNFDEYMKALGVGFATRQVGNVTKPTVIISQEGGKVVIRTQCTFKNTEINFQLGEEFEETSIDDRNCKSVVRLDGDKLIHVQKWDGKETNCTREIKDGKMVVTLTFGDIVAVRCYEKA.

N-acetylvaline is present on Val-2. 127–129 is a binding site for a fatty acid; it reads RCY.

Belongs to the calycin superfamily. Fatty-acid binding protein (FABP) family. Expressed in brain and other neural tissues.

It is found in the cytoplasm. B-FABP could be involved in the transport of a so far unknown hydrophobic ligand with potential morphogenic activity during CNS development. It is required for the establishment of the radial glial fiber system in developing brain, a system that is necessary for the migration of immature neurons to establish cortical layers. This Mus musculus (Mouse) protein is Fatty acid-binding protein, brain (Fabp7).